Consider the following 466-residue polypeptide: Polycomb group protein FIE1 (466 aa).

Positions 1 to 10 are enriched in basic residues; that stretch reads MGPTSRNHKS. The segment at 1–71 is disordered; that stretch reads MGPTSRNHKS…GEGEPQETVL (71 aa). Over residues 31–49 the composition is skewed to low complexity; the sequence is SITASASASAFASPAVANS. WD repeat units follow at residues 167 to 209, 212 to 252, 258 to 298, 324 to 361, 374 to 414, and 421 to 460; these read DMNE…IYKS, GHGG…LILV, GHRH…EYVE, IHSN…ENPG, PECN…PVLI, and QVKS…TAPV.

It belongs to the WD repeat ESC family. Interacts with EZ1 and CLF. Component of the polycomb repressive complex 2 (PRC2), which methylates 'Lys-27' residues of histone H3 (H3K27me3), leading to transcriptional repression of the affected target gene. In terms of tissue distribution, expressed specifically in seed endosperm.

Functionally, polycomb group (PcG) protein. PcG proteins act by forming multiprotein complexes, which are required to maintain the transcriptionally repressive state of homeotic genes throughout development. PcG proteins are not required to initiate repression, but to maintain it during later stages of development. They act via the methylation of histones, rendering chromatin heritably changed in its expressibility. Together with EZ1 and CLF forms a complex that is involved in gene transcriptional repression by trimethylation on histone H3 'Lys-27' (H3K27me3) of target genes. Involved in the regulation of embryo and seed endosperm development. FIE1-containing PcG complex in seed endosperm regulates the expression of various transcription factors by trimethylation on histone H3 'Lys-27' (H3K27me3) of target genes. Involved in the overall expression regulation of nutrient metabolism genes, such as prolamin synthesis and seed storage protein synthesis genes. Can regulate valine, leucine and isoleucine metabolism-related genes. This chain is Polycomb group protein FIE1, found in Oryza sativa subsp. japonica (Rice).